The primary structure comprises 231 residues: Sensory transduction protein BceR (231 aa).

The Response regulatory domain maps to 3–116 (KIMLIEDDHT…VLVAKIQAIL (114 aa)). 4-aspartylphosphate is present on D52. Residues 127 to 225 (TQLKTWCGAT…KVGQGYMAKE (99 aa)) constitute a DNA-binding region (ompR/PhoB-type).

Post-translationally, phosphorylated by BceS.

The protein resides in the cytoplasm. Functionally, member of the two-component regulatory system BceS/BceR involved in the regulation of bacitracin resistance. When activated by BceS, binds to the upstream region of the bceAB promoter and up-regulates the expression of these two genes. The sequence is that of Sensory transduction protein BceR (bceR) from Halalkalibacterium halodurans (strain ATCC BAA-125 / DSM 18197 / FERM 7344 / JCM 9153 / C-125) (Bacillus halodurans).